Here is a 193-residue protein sequence, read N- to C-terminus: MAYSWDNRVKYVVRYMYDIDNNGYLDKNDFECLALRNTLIEGRGEFNSDAYANNQKIMSNLWNEIAELADFNKDGQVTVDEFKQAVQNLCCGKSFDGFPPCFKTVIGRLFKTIDINGDGLAGVDEYRLDCISRSAFSSVKEIDDAYAKLCTDDDKKAGGISLNRYQELYAQFISNPDEKCNAVYLFGPLKEVQ.

3 EF-hand domains span residues 16–40 (MYDIDNNGYLDKNDFECLALRNTLI), 57–92 (IMSNLWNEIAELADFNKDGQVTVDEFKQAVQNLCCG), and 101–136 (CFKTVIGRLFKTIDINGDGLAGVDEYRLDCISRSAF). Ca(2+) contacts are provided by aspartate 18, aspartate 20, asparagine 22, tyrosine 24, aspartate 29, aspartate 70, asparagine 72, aspartate 74, glutamine 76, glutamate 81, aspartate 114, asparagine 116, aspartate 118, and glutamate 125.

In terms of assembly, monomer and dimer. In terms of tissue distribution, skeletal muscle (at protein level).

Its function is as follows. Like parvalbumins, SCPs seem to be more abundant in fast contracting muscles, but no functional relationship can be established from this distribution. This Scylla paramamosain (Mud crab) protein is Sarcoplasmic calcium-binding protein.